We begin with the raw amino-acid sequence, 931 residues long: MKIQKKLTGCSRLMLLCLSLELLLEAGAGNIHYSVPEETDKGSFVGNIAKDLGLQPQELADGGVRIVSRGRMPLFALNPRSGSLITARRIDREELCAQSMPCLVSFNILVEDKMKLFPVEVEIIDINDNTPQFQLEELEFKMNEITTPGTRVSLPFGQDLDVGMNSLQSYQLSSNPHFSLDVQQGADGPQHPEMVLQSPLDREEEAVHHLILTASDGGEPVRSGTLRIYIQVVDANDNPPAFTQAQYHINVPENVPLGTQLLMVNATDPDEGANGEVTYSFHNVDHRVAQIFRLDSYTGEISNKEPLDFEEYKMYSMEVQAQDGAGLMAKVKVLIKVLDVNDNAPEVTITSVTTAVPENFPPGTIIALISVHDQDSGDNGYTTCFIPGNLPFKLEKLVDNYYRLVTERTLDRELISGYNITITAIDQGTPALSTETHISLLVTDINDNSPVFHQDSYSAYIPENNPRGASIFSVRAHDLDSNENAQITYSLIEDTIQGAPLSAYLSINSDTGVLYALRSFDYEQFRDMQLKVMARDSGDPPLSSNVSLSLFLLDQNDNAPEILYPALPTDGSTGVELAPLSAEPGYLVTKVVAVDRDSGQNAWLSYRLLKASEPGLFSVGLHTGEVRTARALLDRDALKQSLVVAVQDHGQPPLSATVTLTVAVADRISDILADLGSLEPSAKPNDSDLTLYLVVAAAAVSCVFLAFVIVLLAHRLRRWHKSRLLQASGGGLASMPGSHFVGVDGVRAFLQTYSHEVSLTADSRKSHLIFPQPNYADTLISQESCEKKGFLSAPQSLLEDKKEPFSQQAPPNTDWRFSQAQRPGTSGSQNGDDTGTWPNNQFDTEMLQAMILASASEAADGSSTLGGGAGTMGLSARYGPQFTLQHVPDYRQNVYIPGSNATLTNAAGKRDGKAPAGGNGNKKKSGKKEKK.

The signal sequence occupies residues 1–28 (MKIQKKLTGCSRLMLLCLSLELLLEAGA). 6 consecutive Cadherin domains span residues 29 to 133 (GNIH…TPQF), 134 to 242 (QLEE…PPAF), 243 to 347 (TQAQ…APEV), 348 to 452 (TITS…SPVF), 453 to 562 (HQDS…APEI), and 570 to 682 (DGST…EPSA). At 29 to 692 (GNIHYSVPEE…KPNDSDLTLY (664 aa)) the chain is on the extracellular side. N-linked (GlcNAc...) asparagine glycans are attached at residues N265, N419, and N545. N685 carries an N-linked (GlcNAc...) asparagine glycan. Residues 693–713 (LVVAAAAVSCVFLAFVIVLLA) form a helical membrane-spanning segment. At 714–931 (HRLRRWHKSR…KKKSGKKEKK (218 aa)) the chain is on the cytoplasmic side. Disordered stretches follow at residues 801 to 840 (KKEP…WPNN) and 901 to 931 (ATLT…KEKK). Residues 805–840 (FSQQAPPNTDWRFSQAQRPGTSGSQNGDDTGTWPNN) are compositionally biased toward polar residues. Over residues 921–931 (NKKKSGKKEKK) the composition is skewed to basic residues.

It is found in the cell membrane. Potential calcium-dependent cell-adhesion protein. May be involved in the establishment and maintenance of specific neuronal connections in the brain. The protein is Protocadherin gamma-A1 (PCDHGA1) of Homo sapiens (Human).